The sequence spans 504 residues: Putative glycerol-3-phosphate transporter 2 (504 aa).

12 consecutive transmembrane segments (helical) span residues 31 to 51, 84 to 104, 116 to 136, 145 to 165, 178 to 198, 210 to 230, 280 to 302, 324 to 344, 352 to 372, 378 to 398, 424 to 444, and 452 to 472; these read LSFK…YIAF, ALLG…MFVA, FLTI…VAFW, FLAV…CIVA, MIMG…SLIA, FLGP…FLPV, IPGV…TFLY, GNLS…AGYI, AITA…YRVF, TINV…FALI, AIID…TGYI, and VFYM…KLII.

This sequence belongs to the major facilitator superfamily. Organophosphate:Pi antiporter (OPA) (TC 2.A.1.4) family. Expressed in the root-hair differentiation zone.

It localises to the membrane. In Arabidopsis thaliana (Mouse-ear cress), this protein is Putative glycerol-3-phosphate transporter 2.